Here is a 708-residue protein sequence, read N- to C-terminus: Radial spoke head protein 6 homolog A (708 aa).

Disordered regions lie at residues M1–P94, E376–K407, E495–N514, and G663–D708. The span at P10–L32 shows a compositional bias: polar residues. The span at R47 to Q56 shows a compositional bias: low complexity. Residues E495–G504 are compositionally biased toward acidic residues. The segment covering L680–A690 has biased composition (low complexity). Over residues A691–D708 the composition is skewed to acidic residues.

It belongs to the flagellar radial spoke RSP4/6 family. In terms of assembly, component of the axonemal radial spoke 1 (RS1) and 2 (RS2) complexes, at least composed of spoke head proteins RSPH1, RSPH3, RSPH9 and the cilia-specific component RSPH4A or sperm-specific component RSPH6A, spoke stalk proteins RSPH14, DNAJB13, DYDC1, ROPN1L and NME5, and the RS1 complex-specific anchor protein IQUB. Interacts with RSPH1. Interacts with RSPH3B. Interacts with RSPH4A. Interacts with RSPH9. Interacts with RSPH10B. Phosphorylated by PKA. Phosphorylation increases in capacitated sperm. In terms of tissue distribution, expressed in sperm and testis (at protein level).

Its subcellular location is the cytoplasm. The protein resides in the cytoskeleton. It localises to the flagellum axoneme. Its function is as follows. Functions as part of radial spoke complexes in the axoneme of sperm flagella that play an important part in motility. The triple radial spokes (RS1, RS2 and RS3) are required to modulate beating of the sperm flagellum. This Mus musculus (Mouse) protein is Radial spoke head protein 6 homolog A.